A 99-amino-acid chain; its full sequence is UPF0386 protein mll0189 (99 aa).

Belongs to the UPF0386 family.

The sequence is that of UPF0386 protein mll0189 from Mesorhizobium japonicum (strain LMG 29417 / CECT 9101 / MAFF 303099) (Mesorhizobium loti (strain MAFF 303099)).